The primary structure comprises 155 residues: RING finger protein 122 (155 aa).

Residues 40 to 60 (VIFGTGIFVFMLSLIFCCYFI) form a helical membrane-spanning segment. The RING-type; atypical zinc finger occupies 93–134 (CAVCLEDFKGKDELGVLPCQHAFHRKCLVKWLEVRCVCPMCN).

As to expression, widely expressed in several tissues and cell lines.

The protein localises to the golgi apparatus. Its subcellular location is the endoplasmic reticulum. The protein resides in the membrane. Its function is as follows. May induce necrosis and apoptosis. May play a role in cell viability. The sequence is that of RING finger protein 122 (RNF122) from Homo sapiens (Human).